The primary structure comprises 558 residues: Urocanate hydratase (558 aa).

NAD(+) is bound by residues 54–55, Gln132, 178–180, Glu198, 244–245, 265–269, 275–276, and Tyr324; these read GG, GMG, NA, QTSAH, and YL. Residue Cys412 is part of the active site. Gly494 is a binding site for NAD(+).

This sequence belongs to the urocanase family. NAD(+) serves as cofactor.

The protein localises to the cytoplasm. The enzyme catalyses 4-imidazolone-5-propanoate = trans-urocanate + H2O. It participates in amino-acid degradation; L-histidine degradation into L-glutamate; N-formimidoyl-L-glutamate from L-histidine: step 2/3. In terms of biological role, catalyzes the conversion of urocanate to 4-imidazolone-5-propionate. The sequence is that of Urocanate hydratase from Acinetobacter baumannii (strain SDF).